A 330-amino-acid chain; its full sequence is Ketol-acid reductoisomerase (NADP(+)) (330 aa).

Residues 2–182 (ARMYYDADAN…GGTRAGILET (181 aa)) form the KARI N-terminal Rossmann domain. Residues 25–28 (YGSQ), S51, S53, and 83–86 (DEFQ) each bind NADP(+). Residue H108 is part of the active site. G134 contributes to the NADP(+) binding site. Residues 183–328 (SFREETETDL…KDLRAMFSWL (146 aa)) form the KARI C-terminal knotted domain. Positions 191, 195, 227, and 231 each coordinate Mg(2+). Residue S252 coordinates substrate.

The protein belongs to the ketol-acid reductoisomerase family. Mg(2+) serves as cofactor.

It catalyses the reaction (2R)-2,3-dihydroxy-3-methylbutanoate + NADP(+) = (2S)-2-acetolactate + NADPH + H(+). It carries out the reaction (2R,3R)-2,3-dihydroxy-3-methylpentanoate + NADP(+) = (S)-2-ethyl-2-hydroxy-3-oxobutanoate + NADPH + H(+). It participates in amino-acid biosynthesis; L-isoleucine biosynthesis; L-isoleucine from 2-oxobutanoate: step 2/4. It functions in the pathway amino-acid biosynthesis; L-valine biosynthesis; L-valine from pyruvate: step 2/4. Its function is as follows. Involved in the biosynthesis of branched-chain amino acids (BCAA). Catalyzes an alkyl-migration followed by a ketol-acid reduction of (S)-2-acetolactate (S2AL) to yield (R)-2,3-dihydroxy-isovalerate. In the isomerase reaction, S2AL is rearranged via a Mg-dependent methyl migration to produce 3-hydroxy-3-methyl-2-ketobutyrate (HMKB). In the reductase reaction, this 2-ketoacid undergoes a metal-dependent reduction by NADPH to yield (R)-2,3-dihydroxy-isovalerate. The chain is Ketol-acid reductoisomerase (NADP(+)) from Synechococcus elongatus (strain ATCC 33912 / PCC 7942 / FACHB-805) (Anacystis nidulans R2).